A 475-amino-acid polypeptide reads, in one-letter code: MTTLPPLPMTRPKLTALARQKLPCSSRKIPRSQLIKEKDDIDHYLEVNFKGLSKEEVAAYRNSYKKNICVDMLRDGYHKSFTELFALMEQWDALREAARVRSLFWLQKPLEEQPDKLDYFYHYLTRAEDAERKKSFEDVYNNLYALACYFNNPEDKWVRNHFYERCFKIAQLIKIDGGKKEAEAHMHMGLLYEEDGQLLEAAEHYEAFHQLTQGRIWKDETGRSLNLLACESLLRTYRLLSDKMLQNKEYKQAIKILIKASEIAKEGSDKKMEGEASYYLGLAHLAAEEYETALTVLDTYCKISTELDDDLSLGRAYEAIAKVLQSQGNTTEAIKYLKKFVKIARNNFQSLDFVRASTMLGDIYNEKGHYNKASQRFQQAFDTTVELMSMPLMDETKVHYGIAKAHQMMLTVNNYIESADLTSLNYLLSWKESRGDIEPDPVTEEFRGSTVETVSQNSEHLEELSRFPGDQKNET.

TPR repeat units lie at residues 92–131 (DALR…EDAE), 136–173 (FEDV…AQLI), 182–215 (AEAH…TQGR), 234–267 (LRTY…AKEG), 274–307 (GEAS…STEL), 314–347 (GRAY…ARNN), and 354–387 (VRAS…TVEL). The interval 436–475 (DIEPDPVTEEFRGSTVETVSQNSEHLEELSRFPGDQKNET) is disordered. Over residues 459 to 475 (EHLEELSRFPGDQKNET) the composition is skewed to basic and acidic residues.

The protein localises to the cytoplasm. Its subcellular location is the cytoskeleton. The protein resides in the flagellum axoneme. Its function is as follows. Axonemal protein which is implicated in axonemal and/or peri-axonemal structure assembly and regulates flagellum assembly and beating and therefore sperm motility. This is Tetratricopeptide repeat protein 29 (TTC29) from Macaca fascicularis (Crab-eating macaque).